Reading from the N-terminus, the 371-residue chain is Chaperone protein DnaJ (371 aa).

One can recognise a J domain in the interval 5 to 70; it reads DYYEVLGVNR…QKRAAYDQYG (66 aa). Positions 31–52 are disordered; that stretch reads KYHPDRNPDNPKAEESFKEAKE. The segment covering 32-52 has biased composition (basic and acidic residues); sequence YHPDRNPDNPKAEESFKEAKE. The segment at 132–210 adopts a CR-type zinc-finger fold; that stretch reads RTETKIRIPV…CQGAGRVKKH (79 aa). C145, C148, C162, C165, C184, C187, C198, and C201 together coordinate Zn(2+). 4 CXXCXGXG motif repeats span residues 145–152, 162–169, 184–191, and 198–205; these read CETCHGSG, CTTCGGHG, CPKCHGSG, and CPSCQGAG.

It belongs to the DnaJ family. In terms of assembly, homodimer. It depends on Zn(2+) as a cofactor.

It localises to the cytoplasm. Its function is as follows. Participates actively in the response to hyperosmotic and heat shock by preventing the aggregation of stress-denatured proteins and by disaggregating proteins, also in an autonomous, DnaK-independent fashion. Unfolded proteins bind initially to DnaJ; upon interaction with the DnaJ-bound protein, DnaK hydrolyzes its bound ATP, resulting in the formation of a stable complex. GrpE releases ADP from DnaK; ATP binding to DnaK triggers the release of the substrate protein, thus completing the reaction cycle. Several rounds of ATP-dependent interactions between DnaJ, DnaK and GrpE are required for fully efficient folding. Also involved, together with DnaK and GrpE, in the DNA replication of plasmids through activation of initiation proteins. The chain is Chaperone protein DnaJ from Methylovorus sp. (strain SS1 / DSM 11726).